Consider the following 539-residue polypeptide: Keratin, type II cytoskeletal 73 (539 aa).

The head stretch occupies residues 1–130 (MNRQFTCKPG…DPEIQKVRAQ (130 aa)). The segment at 131–166 (EREQIKALNNKFASFIDKVRFLEQQNQVLQTKWELL) is coil 1A. The IF rod domain occupies 131–444 (EREQIKALNN…KLLEGEECRM (314 aa)). Positions 167 to 185 (QQLDLSNCRRNLEPVYEAH) are linker 1. The interval 186-277 (ISSLQKQLDS…CLYEGEITQM (92 aa)) is coil 1B. Residues 278 to 301 (QSHISDTSVVLSMDNNRNLDLDSI) form a linker 12 region. Residues 302 to 440 (IAEVRAQYED…ATYRKLLEGE (139 aa)) are coil 2. The tail stretch occupies residues 441 to 539 (ECRMSGEHTS…LGSPSKKTMR (99 aa)).

Belongs to the intermediate filament family. Heterotetramer of two type I and two type II keratins.

Has a role in hair formation. Specific component of keratin intermediate filaments in the inner root sheath (IRS) of the hair follicle. This is Keratin, type II cytoskeletal 73 (Krt73) from Mus musculus (Mouse).